The primary structure comprises 328 residues: Phosphate acyltransferase (328 aa).

Belongs to the PlsX family. As to quaternary structure, homodimer. Probably interacts with PlsY.

The protein localises to the cytoplasm. It catalyses the reaction a fatty acyl-[ACP] + phosphate = an acyl phosphate + holo-[ACP]. The protein operates within lipid metabolism; phospholipid metabolism. Catalyzes the reversible formation of acyl-phosphate (acyl-PO(4)) from acyl-[acyl-carrier-protein] (acyl-ACP). This enzyme utilizes acyl-ACP as fatty acyl donor, but not acyl-CoA. This chain is Phosphate acyltransferase, found in Staphylococcus aureus (strain MSSA476).